A 140-amino-acid chain; its full sequence is VapC ribonuclease Y4jK (140 aa).

The 134-residue stretch at 2–135 (IVLDTNVISE…FEAAGLDIIN (134 aa)) folds into the PINc domain. The Mg(2+) site is built by D5 and D104.

It belongs to the PINc/VapC protein family. It depends on Mg(2+) as a cofactor.

Functionally, toxic component of a type II toxin-antitoxin (TA) system. An RNase. Involved in plasmid stability. In Sinorhizobium fredii (strain NBRC 101917 / NGR234), this protein is VapC ribonuclease Y4jK.